Reading from the N-terminus, the 330-residue chain is AH receptor-interacting protein (330 aa).

Residues G31–C121 enclose the PPIase FKBP-type domain. S43 carries the phosphoserine modification. TPR repeat units lie at residues V179 to L212, T231 to N264, and V265 to L298.

In terms of assembly, interacts with RET in the pituitary gland; this interaction prevents the formation of the AIP-survivin complex. Widely expressed. Higher levels seen in the heart, placenta and skeletal muscle. Not expressed in the liver.

It is found in the cytoplasm. Its function is as follows. May play a positive role in AHR-mediated (aromatic hydrocarbon receptor) signaling, possibly by influencing its receptivity for ligand and/or its nuclear targeting. Cellular negative regulator of the hepatitis B virus (HBV) X protein. The polypeptide is AH receptor-interacting protein (AIP) (Homo sapiens (Human)).